We begin with the raw amino-acid sequence, 89 residues long: Myrmicitoxin(1)-Pr2c (89 aa).

The N-terminal stretch at 1-23 (MEIPKLLYIAVIAIGLSGSLTCA) is a signal peptide. Positions 24–61 (TPLANPWADPEAEANPKAKATAEATAEAIAEALAEPEP) are excised as a propeptide. Position 88 is an asparagine amide (asparagine 88).

This sequence belongs to the formicidae venom clade 1 family. As to expression, expressed by the venom gland.

It localises to the secreted. Its function is as follows. Vertebrate-selective toxin that causes pain by targeting voltage-gated sodium channels. This is Myrmicitoxin(1)-Pr2c from Pogonomyrmex rugosus (Desert harvester ant).